The primary structure comprises 130 residues: Fluoride-specific ion channel FluC (130 aa).

The next 4 helical transmembrane spans lie at 3–23, 38–58, 67–87, and 102–122; these read LVFL…YFVG, LGTF…GHLA, FGIF…SYGL, and ISYV…GWFL. Gly-77 and Thr-80 together coordinate Na(+).

The protein belongs to the fluoride channel Fluc/FEX (TC 1.A.43) family.

The protein resides in the cell inner membrane. The enzyme catalyses fluoride(in) = fluoride(out). Na(+) is not transported, but it plays an essential structural role and its presence is essential for fluoride channel function. Functionally, fluoride-specific ion channel. Important for reducing fluoride concentration in the cell, thus reducing its toxicity. This Helicobacter pylori (strain J99 / ATCC 700824) (Campylobacter pylori J99) protein is Fluoride-specific ion channel FluC.